Consider the following 198-residue polypeptide: Dephospho-CoA kinase (198 aa).

The 196-residue stretch at 3-198 (LIGLTGGIAS…VDALWAGLRG (196 aa)) folds into the DPCK domain. Position 11–16 (11–16 (ASGKST)) interacts with ATP.

This sequence belongs to the CoaE family.

The protein resides in the cytoplasm. It carries out the reaction 3'-dephospho-CoA + ATP = ADP + CoA + H(+). The protein operates within cofactor biosynthesis; coenzyme A biosynthesis; CoA from (R)-pantothenate: step 5/5. Its function is as follows. Catalyzes the phosphorylation of the 3'-hydroxyl group of dephosphocoenzyme A to form coenzyme A. The protein is Dephospho-CoA kinase of Leifsonia xyli subsp. xyli (strain CTCB07).